The following is a 165-amino-acid chain: Yapsin-5 (165 aa).

Residues 1–24 (MQLFSILSLLSSLMCSLTVLGSSA) form the signal peptide. N-linked (GlcNAc...) asparagine glycosylation is present at N57. The Peptidase A1 domain maps to 67-165 (YVVKMEIGTP…TRLSSMTYTY (99 aa)).

It belongs to the peptidase A1 family.

The polypeptide is Yapsin-5 (YPS5) (Saccharomyces cerevisiae (strain ATCC 204508 / S288c) (Baker's yeast)).